Here is a 399-residue protein sequence, read N- to C-terminus: Tyrosine--tRNA ligase 2 (399 aa).

Positions 42 to 51 match the 'HIGH' region motif; sequence PTAPDLHLGH. A 'KMSKS' region motif is present at residues 226–230; sequence KMSKS. Lys-229 lines the ATP pocket. Residues 336 to 396 form the S4 RNA-binding domain; the sequence is MPVASVLNKA…GKKAFARITL (61 aa).

This sequence belongs to the class-I aminoacyl-tRNA synthetase family. TyrS type 2 subfamily. As to quaternary structure, homodimer.

The protein resides in the cytoplasm. The catalysed reaction is tRNA(Tyr) + L-tyrosine + ATP = L-tyrosyl-tRNA(Tyr) + AMP + diphosphate + H(+). In terms of biological role, catalyzes the attachment of tyrosine to tRNA(Tyr) in a two-step reaction: tyrosine is first activated by ATP to form Tyr-AMP and then transferred to the acceptor end of tRNA(Tyr). This chain is Tyrosine--tRNA ligase 2, found in Pseudomonas aeruginosa (strain ATCC 15692 / DSM 22644 / CIP 104116 / JCM 14847 / LMG 12228 / 1C / PRS 101 / PAO1).